Reading from the N-terminus, the 521-residue chain is Probable glycine dehydrogenase (decarboxylating) subunit 2 (521 aa).

Lysine 279 is modified (N6-(pyridoxal phosphate)lysine).

The protein belongs to the GcvP family. C-terminal subunit subfamily. The glycine cleavage system is composed of four proteins: P, T, L and H. In this organism, the P 'protein' is a heterodimer of two subunits. Requires pyridoxal 5'-phosphate as cofactor.

The catalysed reaction is N(6)-[(R)-lipoyl]-L-lysyl-[glycine-cleavage complex H protein] + glycine + H(+) = N(6)-[(R)-S(8)-aminomethyldihydrolipoyl]-L-lysyl-[glycine-cleavage complex H protein] + CO2. The glycine cleavage system catalyzes the degradation of glycine. The P protein binds the alpha-amino group of glycine through its pyridoxal phosphate cofactor; CO(2) is released and the remaining methylamine moiety is then transferred to the lipoamide cofactor of the H protein. The polypeptide is Probable glycine dehydrogenase (decarboxylating) subunit 2 (Staphylothermus marinus (strain ATCC 43588 / DSM 3639 / JCM 9404 / F1)).